The chain runs to 691 residues: Ubiquitin-like domain-containing protein CIP73 (691 aa).

One can recognise a Ubiquitin-like domain in the interval 22 to 97; the sequence is IEIKIKMLDS…LHLVARHPDL (76 aa). Disordered stretches follow at residues 92 to 118, 176 to 203, 264 to 283, 432 to 473, 499 to 554, 590 to 624, and 645 to 691; these read ARHP…TGHG, TGLG…ISSD, RNEE…EGLS, ASTT…ASIA, SVNT…SSRV, EIHV…EPNV, and HIGR…QKME. Polar residues-rich tracts occupy residues 104-118, 178-189, 273-283, 446-465, and 499-523; these read PNHS…TGHG, LGRTSDFTGNPS, SRLSSTPEGLS, TQSA…QTTS, and SVNT…STAE. Residues 525 to 535 show a composition bias toward basic and acidic residues; that stretch reads TLHRQSMEDSA. Over residues 536–554 the composition is skewed to polar residues; sequence RNGTLPTPNTQQEPSSSRV. Positions 597–617 are enriched in low complexity; it reads SSQGTTAGVTSAATSSGAAQA.

As to quaternary structure, interacts with CCAMK. In terms of processing, phosphorylated at the N-terminus by CCAMK. In terms of tissue distribution, highly epressed in roots. Expressed at very low levels in leaves and stems.

The protein localises to the nucleus. Its function is as follows. Involved in root nodulation. Required for root nodule organogenesis after infection by symbiotic rhizobia. Probably not involved in arbuscular mycorrhizal (AM) symbiosis. Acts downstream of CCAMK. The protein is Ubiquitin-like domain-containing protein CIP73 of Lotus japonicus (Lotus corniculatus var. japonicus).